A 245-amino-acid chain; its full sequence is Uridylate kinase (245 aa).

Lys-20 to Gly-23 is a binding site for ATP. Gly-60 is a binding site for UMP. ATP-binding residues include Gly-61 and Arg-65. Residues Asp-80 and Ala-141–Thr-148 each bind UMP. ATP-binding residues include Tyr-175 and Asp-178.

The protein belongs to the UMP kinase family. As to quaternary structure, homohexamer.

It localises to the cytoplasm. It catalyses the reaction UMP + ATP = UDP + ADP. Its pathway is pyrimidine metabolism; CTP biosynthesis via de novo pathway; UDP from UMP (UMPK route): step 1/1. With respect to regulation, inhibited by UTP. Functionally, catalyzes the reversible phosphorylation of UMP to UDP. The polypeptide is Uridylate kinase (Arthrobacter sp. (strain FB24)).